Reading from the N-terminus, the 276-residue chain is UDP-3-O-acyl-N-acetylglucosamine deacetylase (276 aa).

Zn(2+) is bound by residues His-76, His-234, and Asp-238. The active-site Proton donor is His-261.

The protein belongs to the LpxC family. Zn(2+) serves as cofactor.

The enzyme catalyses a UDP-3-O-[(3R)-3-hydroxyacyl]-N-acetyl-alpha-D-glucosamine + H2O = a UDP-3-O-[(3R)-3-hydroxyacyl]-alpha-D-glucosamine + acetate. It participates in glycolipid biosynthesis; lipid IV(A) biosynthesis; lipid IV(A) from (3R)-3-hydroxytetradecanoyl-[acyl-carrier-protein] and UDP-N-acetyl-alpha-D-glucosamine: step 2/6. Functionally, catalyzes the hydrolysis of UDP-3-O-myristoyl-N-acetylglucosamine to form UDP-3-O-myristoylglucosamine and acetate, the committed step in lipid A biosynthesis. The chain is UDP-3-O-acyl-N-acetylglucosamine deacetylase from Synechocystis sp. (strain ATCC 27184 / PCC 6803 / Kazusa).